Here is a 263-residue protein sequence, read N- to C-terminus: Small ribosomal subunit protein eS1 (263 aa).

Basic and acidic residues predominate over residues 236–254; that stretch reads GDGKGGSDEPGARVDRPEG. The interval 236–263 is disordered; it reads GDGKGGSDEPGARVDRPEGYEPPVQETV.

This sequence belongs to the eukaryotic ribosomal protein eS1 family. As to quaternary structure, component of the small ribosomal subunit. Mature ribosomes consist of a small (40S) and a large (60S) subunit. The 40S subunit contains about 33 different proteins and 1 molecule of RNA (18S). The 60S subunit contains about 49 different proteins and 3 molecules of RNA (28S, 5.8S and 5S).

The protein localises to the cytoplasm. This chain is Small ribosomal subunit protein eS1, found in Periplaneta americana (American cockroach).